The following is a 462-amino-acid chain: Argininosuccinate lyase (462 aa).

This sequence belongs to the lyase 1 family. Argininosuccinate lyase subfamily.

It is found in the cytoplasm. The catalysed reaction is 2-(N(omega)-L-arginino)succinate = fumarate + L-arginine. The protein operates within amino-acid biosynthesis; L-arginine biosynthesis; L-arginine from L-ornithine and carbamoyl phosphate: step 3/3. The sequence is that of Argininosuccinate lyase from Bacillus cytotoxicus (strain DSM 22905 / CIP 110041 / 391-98 / NVH 391-98).